Here is a 201-residue protein sequence, read N- to C-terminus: Auxin-binding protein 1 (201 aa).

An N-terminal signal peptide occupies residues 1–38; the sequence is MAPDLSELAAAAAARGAYLAGVGVAVLLAASFLPVAES. C40 and C193 form a disulfide bridge. 3 residues coordinate Zn(2+): H95, H97, and E101. N133 carries N-linked (GlcNAc...) asparagine glycosylation. H144 lines the Zn(2+) pocket. Residues 198-201 carry the Prevents secretion from ER motif; the sequence is KDEL.

Homodimer. Post-translationally, glycosylated. In terms of tissue distribution, expressed in roots, coleoptiles, leaves, stems, tassels and ears.

Its subcellular location is the endoplasmic reticulum lumen. Functionally, receptor for the plant hormone auxin. The protein is Auxin-binding protein 1 of Zea mays (Maize).